We begin with the raw amino-acid sequence, 633 residues long: Uracil permease (633 aa).

Transmembrane regions (helical) follow at residues 143 to 163 (WWQC…FVVL), 173 to 193 (LSFP…WPVI), 197 to 217 (VMAI…VSLM), 242 to 262 (YEFM…LVPP), 268 to 288 (LFTV…IWAI), 310 to 330 (FSWA…TMVI), 350 to 370 (LVCI…VTAA), 400 to 420 (AGVF…NISA), 442 to 462 (GSLF…MATS), 465 to 485 (FTMA…VVCS), 521 to 541 (ALAA…AEVG), and 559 to 579 (YWVG…FFPV).

This sequence belongs to the purine-cytosine permease (2.A.39) family. Glycosylated (possible); but there is not yet direct biochemical evidence for it.

It localises to the membrane. In terms of biological role, transport of uracil. In Saccharomyces cerevisiae (strain ATCC 204508 / S288c) (Baker's yeast), this protein is Uracil permease (FUR4).